The following is a 227-amino-acid chain: Probable septum site-determining protein MinC (227 aa).

It belongs to the MinC family. In terms of assembly, interacts with MinD and FtsZ.

Its function is as follows. Cell division inhibitor that blocks the formation of polar Z ring septums. Rapidly oscillates between the poles of the cell to destabilize FtsZ filaments that have formed before they mature into polar Z rings. Prevents FtsZ polymerization. The chain is Probable septum site-determining protein MinC from Laribacter hongkongensis (strain HLHK9).